A 250-amino-acid polypeptide reads, in one-letter code: MPRKNYICNLKPVFNPPKNEKKRSNFIDYAMKKASEIDVARSKLNYTLLAIDPKTGNILPRFRRLNEHRACAMRAIVLAMLYYWNTNSNLVEASIEKLSDECGLSTFSNSGNKSITRASRLITDFMEPMGFIKCKRKKTQSSSNYIPKKIFLTSNFFMLFHISQSTINQYLSEQKQSIKNLKKEKKIFISFSDIRVISKLDEKAARNKILNALIKYYSASELTKIGPQGLKKKIDIEYSNLCKLYKKNNK.

The protein belongs to the IncFII RepA family.

This protein is essential for plasmid replication; it is involved in copy control functions. In Buchnera aphidicola subsp. Schizaphis graminum (strain Sg), this protein is Probable replication-associated protein repA2 (repA2).